The primary structure comprises 315 residues: tRNA dimethylallyltransferase (315 aa).

13–20 (GPTASGKT) is a binding site for ATP. 15 to 20 (TASGKT) serves as a coordination point for substrate. Interaction with substrate tRNA stretches follow at residues 38–41 (DSAL), 162–166 (QRLSR), 243–248 (RCVGYR), and 276–283 (KRQITWLR).

This sequence belongs to the IPP transferase family. In terms of assembly, monomer. Requires Mg(2+) as cofactor.

It carries out the reaction adenosine(37) in tRNA + dimethylallyl diphosphate = N(6)-dimethylallyladenosine(37) in tRNA + diphosphate. Functionally, catalyzes the transfer of a dimethylallyl group onto the adenine at position 37 in tRNAs that read codons beginning with uridine, leading to the formation of N6-(dimethylallyl)adenosine (i(6)A). The chain is tRNA dimethylallyltransferase from Vibrio vulnificus (strain CMCP6).